The sequence spans 81 residues: Defensin-like protein 266 (81 aa).

Residues methionine 1–alanine 26 form the signal peptide. Intrachain disulfides connect cysteine 40–cysteine 58, cysteine 46–cysteine 63, and cysteine 50–cysteine 65.

Belongs to the DEFL family.

The protein resides in the secreted. The polypeptide is Defensin-like protein 266 (Arabidopsis thaliana (Mouse-ear cress)).